Consider the following 445-residue polypeptide: Putative serpin-Z5 (445 aa).

The segment at 356–380 is RCL; it reads GTEAAASAINMVCGMSMTPEPRPVP.

It belongs to the serpin family.

Functionally, probable serine protease inhibitor. This Oryza sativa subsp. japonica (Rice) protein is Putative serpin-Z5.